A 153-amino-acid chain; its full sequence is Ribosome maturation factor RimP (153 aa).

The protein belongs to the RimP family.

It is found in the cytoplasm. Functionally, required for maturation of 30S ribosomal subunits. The chain is Ribosome maturation factor RimP from Acidithiobacillus ferrooxidans (strain ATCC 53993 / BNL-5-31) (Leptospirillum ferrooxidans (ATCC 53993)).